Here is a 219-residue protein sequence, read N- to C-terminus: Proteasome subunit beta type-9 (219 aa).

A propeptide spans 1-20 (MLRAGAPTAGSFRTKEVHTG) (removed in mature form). The active-site Nucleophile is T21. K53 and K109 each carry N6-acetyllysine.

The protein belongs to the peptidase T1B family. The 26S proteasome consists of a 20S proteasome core and two 19S regulatory subunits. The 20S proteasome core is composed of 28 subunits that are arranged in four stacked rings, resulting in a barrel-shaped structure. The two end rings are each formed by seven alpha subunits, and the two central rings are each formed by seven beta subunits. The catalytic chamber with the active sites is on the inside of the barrel. Component of the immunoproteasome, where it displaces the equivalent housekeeping subunit PSMB6. Component of the spermatoproteasome, a form of the proteasome specifically found in testis. Post-translationally, autocleaved. The resulting N-terminal Thr residue of the mature subunit is responsible for the nucleophile proteolytic activity.

It localises to the cytoplasm. It is found in the nucleus. The enzyme catalyses Cleavage of peptide bonds with very broad specificity.. In terms of biological role, the proteasome is a multicatalytic proteinase complex which is characterized by its ability to cleave peptides with Arg, Phe, Tyr, Leu, and Glu adjacent to the leaving group at neutral or slightly basic pH. The proteasome has an ATP-dependent proteolytic activity. This subunit is involved in antigen processing to generate class I binding peptides. In Mus platythrix (Flat-haired mouse), this protein is Proteasome subunit beta type-9 (Psmb9).